Reading from the N-terminus, the 544-residue chain is CTP synthase (544 aa).

The amidoligase domain stretch occupies residues 1-265 (MTKFIFVTGG…DNIITEQLQL (265 aa)). A CTP-binding site is contributed by S13. Residue S13 coordinates UTP. Residues 14-19 (SLGKGI) and D71 each bind ATP. Residues D71 and E139 each contribute to the Mg(2+) site. Residues 146 to 148 (DIE), 186 to 191 (KTKPTQ), and K222 contribute to the CTP site. UTP is bound by residues 186 to 191 (KTKPTQ) and K222. The 255-residue stretch at 290–544 (KIAMVGKYVD…VKAALNNKKA (255 aa)) folds into the Glutamine amidotransferase type-1 domain. G353 provides a ligand contact to L-glutamine. C380 acts as the Nucleophile; for glutamine hydrolysis in catalysis. L-glutamine is bound by residues 381–384 (LGMQ), E404, and R471. Residues H517 and E519 contribute to the active site.

It belongs to the CTP synthase family. Homotetramer.

The catalysed reaction is UTP + L-glutamine + ATP + H2O = CTP + L-glutamate + ADP + phosphate + 2 H(+). It catalyses the reaction L-glutamine + H2O = L-glutamate + NH4(+). The enzyme catalyses UTP + NH4(+) + ATP = CTP + ADP + phosphate + 2 H(+). The protein operates within pyrimidine metabolism; CTP biosynthesis via de novo pathway; CTP from UDP: step 2/2. With respect to regulation, allosterically activated by GTP, when glutamine is the substrate; GTP has no effect on the reaction when ammonia is the substrate. The allosteric effector GTP functions by stabilizing the protein conformation that binds the tetrahedral intermediate(s) formed during glutamine hydrolysis. Inhibited by the product CTP, via allosteric rather than competitive inhibition. Functionally, catalyzes the ATP-dependent amination of UTP to CTP with either L-glutamine or ammonia as the source of nitrogen. Regulates intracellular CTP levels through interactions with the four ribonucleotide triphosphates. This Neisseria meningitidis serogroup C / serotype 2a (strain ATCC 700532 / DSM 15464 / FAM18) protein is CTP synthase.